We begin with the raw amino-acid sequence, 208 residues long: Putative ADP-ribose pyrophosphatase YjhB (208 aa).

The Nudix hydrolase domain occupies 69 to 195 (TPKADVRGAV…NTPSQLSMLF (127 aa)). A Nudix box motif is present at residues 100-121 (GFCEIGLSPAENVVKEIKEESG). Positions 115 and 119 each coordinate Mg(2+).

This sequence belongs to the Nudix hydrolase family. Requires Mg(2+) as cofactor. Mn(2+) serves as cofactor.

Probably mediates the hydrolysis of some nucleoside diphosphate derivatives. This chain is Putative ADP-ribose pyrophosphatase YjhB (yjhB), found in Bacillus subtilis (strain 168).